The sequence spans 95 residues: Acylphosphatase (95 aa).

One can recognise an Acylphosphatase-like domain in the interval 10 to 95 (CIHVTVSGKV…VEDYSDFRVR (86 aa)). Residues Arg-25 and Asn-43 contribute to the active site.

Belongs to the acylphosphatase family.

The catalysed reaction is an acyl phosphate + H2O = a carboxylate + phosphate + H(+). This is Acylphosphatase (acyP) from Coxiella burnetii (strain RSA 493 / Nine Mile phase I).